We begin with the raw amino-acid sequence, 462 residues long: Cytochrome P450 20A1 (462 aa).

A helical membrane pass occupies residues 4-24; sequence FAIFAVTFLLALVGAVLYLYP. Cys409 is a heme binding site.

It belongs to the cytochrome P450 family. Requires heme as cofactor.

It localises to the membrane. In Homo sapiens (Human), this protein is Cytochrome P450 20A1 (CYP20A1).